The primary structure comprises 141 residues: Decarboxylase CPUR_05434 (141 aa).

Residues 26 to 121 (EGMSEEAYRN…MHDHEMFADT (96 aa)) form the EthD domain.

It belongs to the tpcK family.

It catalyses the reaction atrochrysone carboxylate + H(+) = atrochrysone + CO2. In terms of biological role, decarboxylase; part of the ergochrome gene cluster responsible for the typical purple-black color of the ergot sclerotia. The ergochrome gene cluster produces several ergot pigments including the yellow ergochrome secalonic acid and its derivatives, as well as the red anthraquinones endocrocin and clavorubin. The pathway begins with the synthesis of atrochrysone thioester by the polyketide synthase (PKS) CPUR_05437. The atrochrysone carboxyl ACP thioesterase CPUR_05436 then breaks the thioester bond and releases the atrochrysone carboxylic acid from CPUR_05437. The decarboxylase CPUR_05434 then catalyzes the concerted decarboxylation-elimination required to convert atochrysone carboxylic acid into emodin anthrone, which is further oxidized to emodin by the anthrone oxygenase CPUR_05435. Emodin is further modified to yield monodictyphenone via several steps involving CPUR_05427, CPUR_05428, CPUR_05429 and CPUR_05430. The short chain dehydrogenase/reductase CPUR_05418 then catalyzes the C-5 ketoreduction to give the xanthone skeleton of the monomeric units. Ergochromes formation requires further dimerization steps of different xanthone units, probably catalyzed by the cytochrome P450 monooxygenase CPUR_05419. CPUR_05425, CPUR_05426 and CPUR_05431 are unique to Claviceps, thus it is likely that they are involved in further modification of xanthone units or in their dimerization. The yellow ergochromes and the red anthraquinone pigments endocrocin and clavorubin are products from the same PKS derived precursors and the latter are likely shunt products in the pathway of xanthone biosynthesis. It is proposed that atrochrysone carboxylic acid released from the PKS CPUR_05437 can also be converted to endocrocin anthrone which is further oxidized into endocrocin by CPUR_05435. Endocrocin could be then modified to clavorubin, possibly by CPUR_05423 and CPUR_05431. Clavorubin is the principal anthraquinone metabolite produced by the cluster with a much higher yield compared to endocrocin. The chain is Decarboxylase CPUR_05434 from Claviceps purpurea (strain 20.1) (Ergot fungus).